The following is a 149-amino-acid chain: FAD synthase (149 aa).

Residues 9-10 (VF), 14-17 (HPGH), D93, and Y120 contribute to the ATP site.

This sequence belongs to the archaeal FAD synthase family. Homodimer. The cofactor is a divalent metal cation.

The catalysed reaction is FMN + ATP + H(+) = FAD + diphosphate. The protein operates within cofactor biosynthesis; FAD biosynthesis; FAD from FMN: step 1/1. In terms of biological role, catalyzes the transfer of the AMP portion of ATP to flavin mononucleotide (FMN) to produce flavin adenine dinucleotide (FAD) coenzyme. This Aciduliprofundum boonei (strain DSM 19572 / T469) protein is FAD synthase.